Consider the following 607-residue polypeptide: V-type proton ATPase catalytic subunit A (607 aa).

251-258 lines the ATP pocket; it reads GAFGCGKT.

It belongs to the ATPase alpha/beta chains family. V-ATPase is a heteromultimeric enzyme composed of a peripheral catalytic V1 complex (components A to H) attached to an integral membrane V0 proton pore complex (components: a, c, c', c'', d, e, f and VOA1).

The protein localises to the vacuole membrane. The enzyme catalyses ATP + H2O + 4 H(+)(in) = ADP + phosphate + 5 H(+)(out). In terms of biological role, catalytic subunit of the V1 complex of vacuolar(H+)-ATPase (V-ATPase), a multisubunit enzyme composed of a peripheral complex (V1) that hydrolyzes ATP and a membrane integral complex (V0) that translocates protons. V-ATPase is responsible for acidifying and maintaining the pH of intracellular compartments. The protein is V-type proton ATPase catalytic subunit A (VMA1) of Encephalitozoon cuniculi (strain GB-M1) (Microsporidian parasite).